The chain runs to 360 residues: MVMGGEASMELDQCFQKMKMEGISIKEWKDIPVELLMRILSLVDDRNVIVASGVCTGWRDAISFGLTRLRLSWCNNNMNSLVLSLVPKFVKLQTLNLRQDKPQLEDNAVEAIANHCHELQELDLSKSLKITDRSLYALAHGCPDLTKLNLSGCTSFSDTAIAYLTRFCRKLKVLNLCGCVKAVTDNALEAIGNNCNQMQSLNLGWCENISDDGVMSLAYGCPDLRTLDLCGCVLITDESVVALADWCVHLRSLGLYYCRNITDRAMYSLAQSGVKNKPGSWKSVKKGKYDEEGLRSLNISQCTALTPSAVQAVCDSFPALHTCSGRHSLVMSGCLNLTTVHCACILQAHRAHNAVPHPAH.

One can recognise an F-box domain in the interval 25–71 (IKEWKDIPVELLMRILSLVDDRNVIVASGVCTGWRDAISFGLTRLRL). Residues 127-128 (SL), 149-152 (NLSG), 175-178 (NLCG), and Asn202 contribute to the (indol-3-yl)acetate site.

Part of a SCF (ASK-cullin-F-box) protein ligase complex. Interacts with CUL1 (RUB1-modified and non-modified isoforms), SKP1A, SKP1B and ASK18. Recruit DPB and phosphorylated E2FC. Interacts with auxin. Auxin controls the interaction with DPB. Polyubiquitinated and subsequently targeted to proteasome. Auxin promotes this ubiquitination-mediated degradation. Expressed in embryo, seedlings, hypocotyl, roots, leaves and flowers.

The protein localises to the nucleus. It participates in protein modification; protein ubiquitination. In terms of biological role, component of SCF(SKP2A) E3 ubiquitin ligase complexes, which mediate the ubiquitination and subsequent proteasomal degradation of target proteins (including cell cycle repressors). Acts as an auxin receptor; one active auxin is indole-3-acetate. Regulates the stability of the transcription factors E2FC and DPB, repressors of cell proliferation. Confers increase tolerance to osmotic stress by promoting cell division, especially in meristems. Promotes the formation of lateral root primordia. In Arabidopsis thaliana (Mouse-ear cress), this protein is F-box protein SKP2A (SKP2A).